The chain runs to 224 residues: Cytidylate kinase (224 aa).

Gly-10–Thr-18 serves as a coordination point for ATP.

This sequence belongs to the cytidylate kinase family. Type 1 subfamily.

Its subcellular location is the cytoplasm. The enzyme catalyses CMP + ATP = CDP + ADP. It catalyses the reaction dCMP + ATP = dCDP + ADP. In Leuconostoc mesenteroides subsp. mesenteroides (strain ATCC 8293 / DSM 20343 / BCRC 11652 / CCM 1803 / JCM 6124 / NCDO 523 / NBRC 100496 / NCIMB 8023 / NCTC 12954 / NRRL B-1118 / 37Y), this protein is Cytidylate kinase.